Reading from the N-terminus, the 67-residue chain is UPF0337 protein BCE_3655 (67 aa).

This sequence belongs to the UPF0337 (CsbD) family.

This is UPF0337 protein BCE_3655 from Bacillus cereus (strain ATCC 10987 / NRS 248).